Here is a 461-residue protein sequence, read N- to C-terminus: tRNA modification GTPase MnmE (461 aa).

Positions 27, 89, and 128 each coordinate (6S)-5-formyl-5,6,7,8-tetrahydrofolate. Residues G224 to F382 form the TrmE-type G domain. N234 provides a ligand contact to K(+). GTP-binding positions include N234–S239, T253–T259, and D278–G281. S238 contributes to the Mg(2+) binding site. Residues T253, V255, and T258 each coordinate K(+). T259 serves as a coordination point for Mg(2+). K461 contributes to the (6S)-5-formyl-5,6,7,8-tetrahydrofolate binding site.

It belongs to the TRAFAC class TrmE-Era-EngA-EngB-Septin-like GTPase superfamily. TrmE GTPase family. As to quaternary structure, homodimer. Heterotetramer of two MnmE and two MnmG subunits. K(+) is required as a cofactor.

It is found in the cytoplasm. Exhibits a very high intrinsic GTPase hydrolysis rate. Involved in the addition of a carboxymethylaminomethyl (cmnm) group at the wobble position (U34) of certain tRNAs, forming tRNA-cmnm(5)s(2)U34. This chain is tRNA modification GTPase MnmE, found in Lactobacillus acidophilus (strain ATCC 700396 / NCK56 / N2 / NCFM).